Consider the following 157-residue polypeptide: Endoribonuclease YbeY (157 aa).

The Zn(2+) site is built by H114, H118, and H124.

The protein belongs to the endoribonuclease YbeY family. Requires Zn(2+) as cofactor.

It localises to the cytoplasm. Functionally, single strand-specific metallo-endoribonuclease involved in late-stage 70S ribosome quality control and in maturation of the 3' terminus of the 16S rRNA. The sequence is that of Endoribonuclease YbeY from Yersinia enterocolitica serotype O:8 / biotype 1B (strain NCTC 13174 / 8081).